The following is a 505-amino-acid chain: Aspartyl/glutamyl-tRNA(Asn/Gln) amidotransferase subunit B (505 aa).

It belongs to the GatB/GatE family. GatB subfamily. Heterotrimer of A, B and C subunits.

It catalyses the reaction L-glutamyl-tRNA(Gln) + L-glutamine + ATP + H2O = L-glutaminyl-tRNA(Gln) + L-glutamate + ADP + phosphate + H(+). It carries out the reaction L-aspartyl-tRNA(Asn) + L-glutamine + ATP + H2O = L-asparaginyl-tRNA(Asn) + L-glutamate + ADP + phosphate + 2 H(+). Functionally, allows the formation of correctly charged Asn-tRNA(Asn) or Gln-tRNA(Gln) through the transamidation of misacylated Asp-tRNA(Asn) or Glu-tRNA(Gln) in organisms which lack either or both of asparaginyl-tRNA or glutaminyl-tRNA synthetases. The reaction takes place in the presence of glutamine and ATP through an activated phospho-Asp-tRNA(Asn) or phospho-Glu-tRNA(Gln). The polypeptide is Aspartyl/glutamyl-tRNA(Asn/Gln) amidotransferase subunit B (Corynebacterium jeikeium (strain K411)).